The chain runs to 131 residues: Small ribosomal subunit protein uS8 (131 aa).

It belongs to the universal ribosomal protein uS8 family. As to quaternary structure, part of the 30S ribosomal subunit. Contacts proteins S5 and S12.

One of the primary rRNA binding proteins, it binds directly to 16S rRNA central domain where it helps coordinate assembly of the platform of the 30S subunit. The chain is Small ribosomal subunit protein uS8 from Sulfurimonas denitrificans (strain ATCC 33889 / DSM 1251) (Thiomicrospira denitrificans (strain ATCC 33889 / DSM 1251)).